Here is a 141-residue protein sequence, read N- to C-terminus: MTVERTFSIIKPNAVKKNAIGAIYARFESAGFKIIAAKMLHLTREQAEGFYAEHKGRPFFDGLVEFMTSGPIVVQVLEGENAVQRHRDLMGATNPDNALAGTLRADYADSFTENAVHGSDAVESANREIAYFFTEDEICPR.

Residues lysine 11, phenylalanine 59, arginine 87, threonine 93, arginine 104, and asparagine 114 each coordinate ATP. Residue histidine 117 is the Pros-phosphohistidine intermediate of the active site.

Belongs to the NDK family. In terms of assembly, homotetramer. Mg(2+) is required as a cofactor.

The protein localises to the cytoplasm. It catalyses the reaction a 2'-deoxyribonucleoside 5'-diphosphate + ATP = a 2'-deoxyribonucleoside 5'-triphosphate + ADP. It carries out the reaction a ribonucleoside 5'-diphosphate + ATP = a ribonucleoside 5'-triphosphate + ADP. In terms of biological role, major role in the synthesis of nucleoside triphosphates other than ATP. The ATP gamma phosphate is transferred to the NDP beta phosphate via a ping-pong mechanism, using a phosphorylated active-site intermediate. In Photorhabdus laumondii subsp. laumondii (strain DSM 15139 / CIP 105565 / TT01) (Photorhabdus luminescens subsp. laumondii), this protein is Nucleoside diphosphate kinase.